Here is a 495-residue protein sequence, read N- to C-terminus: Neuronal acetylcholine receptor subunit beta-4 (495 aa).

The signal sequence occupies residues 1–20 (MRGTPLLLVSLFALLQPGDC). Residues 21-235 (RLANAEEKLM…IIKRKPLFYT (215 aa)) are Extracellular-facing. N-linked (GlcNAc...) asparagine glycosylation is found at asparagine 35, asparagine 92, asparagine 137, and asparagine 165. Cysteine 152 and cysteine 166 are disulfide-bonded. Residues 236 to 256 (INLIIPCVLITSLAILVFYLP) form a helical membrane-spanning segment. The Cytoplasmic segment spans residues 257 to 264 (SDCGEKMT). Glutamate 261 lines the Na(+) pocket. Residues 265–285 (LCISVLLALTFFLLLISKIVP) traverse the membrane as a helical segment. The Extracellular portion of the chain corresponds to 286–297 (PTSLDIPLIGKY). A helical membrane pass occupies residues 298-318 (LLFTMVLVTFSIVTTVCVLNV). At 319-463 (HHRSPSTHTM…WKFVAMVVDR (145 aa)) the chain is on the cytoplasmic side. A helical transmembrane segment spans residues 464–484 (LFLWVFVIVCILGTMGLFLPP). The Extracellular portion of the chain corresponds to 485–495 (LFQIHAPSKGL).

This sequence belongs to the ligand-gated ion channel (TC 1.A.9) family. Acetylcholine receptor (TC 1.A.9.1) subfamily. Beta-4/CHRNB4 sub-subfamily. In terms of assembly, neuronal AChR is composed of two different types of subunits: alpha and beta. CHRNB4/Beta-4 subunit can be combined to CHRNA2/alpha-2, CHRNA3/alpha-3 or CHRNA4/alpha-4, CHRNA5/alpha-5 and CHRNB3/beta-3 to give rise to functional receptors. Forms stoichiometries such as (CHRNA3)2:(CHRNB4)3 or (CHRNA3:CHRNB4)2:CHRNB3. Interacts with RIC3; which is required for proper folding and assembly. Interacts with LYPD6. In terms of tissue distribution, predominantly expressed by immature T-cells in the thymus.

The protein localises to the synaptic cell membrane. The protein resides in the cell membrane. It catalyses the reaction K(+)(in) = K(+)(out). The enzyme catalyses Na(+)(in) = Na(+)(out). It carries out the reaction Ca(2+)(in) = Ca(2+)(out). Activated by a myriad of ligands such as acetylcholine, cytisine, nicotine, choline and epibatidine. The heteropentamer CHRNA3:CHRNB4 activity is blocked by the alpha-conotoxin ImI and AuIB. In terms of biological role, component of neuronal acetylcholine receptors (nAChRs) that function as pentameric, ligand-gated cation channels with high calcium permeability among other activities. nAChRs are excitatory neurotrasnmitter receptors formed by a collection of nAChR subunits known to mediate synaptic transmission in the nervous system and the neuromuscular junction. Each nAchR subunit confers differential attributes to channel properties, including activation, deactivation and desensitization kinetics, pH sensitivity, cation permeability, and binding to allosteric modulators. CHRNB4 forms heteropentameric neuronal acetylcholine receptors with CHRNA2, CHRNA3 and CHRNA4, as well as CHRNA5 and CHRNB3 as accesory subunits. CHRNA3:CHRNB4 being predominant in neurons of the autonomic ganglia, it is known as ganglionic nicotinic receptor. CHRNA3:CHRNB4 or CHRNA3:CHRNA5:CHRNB4 play also an important role in the habenulo-interpeduncular tract, modulating the mesolimbic dopamine system and affecting reward circuits and addiction. Hypothalamic CHRNA3:CHRNB4 nAChR activation by nicotine leads to activation of POMC neurons and a decrease in food intake. The chain is Neuronal acetylcholine receptor subunit beta-4 (Chrnb4) from Mus musculus (Mouse).